The sequence spans 238 residues: Orotidine 5'-phosphate decarboxylase (238 aa).

Substrate-binding positions include aspartate 13, lysine 35, 62-71, threonine 121, arginine 182, glutamine 191, glycine 211, and arginine 212; that span reads DLKFHDIPNT. Residue lysine 64 is the Proton donor of the active site.

The protein belongs to the OMP decarboxylase family. Type 1 subfamily. In terms of assembly, homodimer.

The enzyme catalyses orotidine 5'-phosphate + H(+) = UMP + CO2. It functions in the pathway pyrimidine metabolism; UMP biosynthesis via de novo pathway; UMP from orotate: step 2/2. Functionally, catalyzes the decarboxylation of orotidine 5'-monophosphate (OMP) to uridine 5'-monophosphate (UMP). This Saccharophagus degradans (strain 2-40 / ATCC 43961 / DSM 17024) protein is Orotidine 5'-phosphate decarboxylase.